The sequence spans 355 residues: Spore germination protein XB (355 aa).

10 helical membrane-spanning segments follow: residues 2–24, 34–56, 69–91, 106–128, 135–157, 180–197, 210–232, 265–287, 299–321, and 326–348; these read VNFF…VIII, DSWI…VFIV, LMRN…YLII, FYLP…FYNI, IALT…MIAN, GMIY…ILFL, LIIV…IVEF, VYQW…PDVL, ISIL…SFYW, and VFLP…FVWV.

It belongs to the amino acid-polyamine-organocation (APC) superfamily. Spore germination protein (SGP) (TC 2.A.3.9) family.

Its subcellular location is the cell membrane. In terms of biological role, may allow B.anthracis to germinate within phagocytic cells and therefore involved in virulence. This Bacillus anthracis protein is Spore germination protein XB (gerXB).